Reading from the N-terminus, the 423-residue chain is Glutamate-1-semialdehyde 2,1-aminomutase (423 aa).

Position 258 is an N6-(pyridoxal phosphate)lysine (Lys-258).

Belongs to the class-III pyridoxal-phosphate-dependent aminotransferase family. HemL subfamily. Pyridoxal 5'-phosphate serves as cofactor.

Its subcellular location is the cytoplasm. The catalysed reaction is (S)-4-amino-5-oxopentanoate = 5-aminolevulinate. It participates in porphyrin-containing compound metabolism; protoporphyrin-IX biosynthesis; 5-aminolevulinate from L-glutamyl-tRNA(Glu): step 2/2. The sequence is that of Glutamate-1-semialdehyde 2,1-aminomutase from Pyrobaculum arsenaticum (strain DSM 13514 / JCM 11321 / PZ6).